A 401-amino-acid chain; its full sequence is L-rhamnonate dehydratase (401 aa).

Residues histidine 29 and arginine 55 each contribute to the substrate site. Residues aspartate 222, glutamate 248, and glutamate 276 each contribute to the Mg(2+) site. Residue histidine 325 is the Proton acceptor of the active site. Glutamate 345 lines the substrate pocket.

This sequence belongs to the mandelate racemase/muconate lactonizing enzyme family. RhamD subfamily. As to quaternary structure, homooctamer; tetramer of dimers. Mg(2+) serves as cofactor.

It catalyses the reaction L-rhamnonate = 2-dehydro-3-deoxy-L-rhamnonate + H2O. Its function is as follows. Catalyzes the dehydration of L-rhamnonate to 2-keto-3-deoxy-L-rhamnonate (KDR). The protein is L-rhamnonate dehydratase of Escherichia coli O157:H7.